The following is a 186-amino-acid chain: 3-hydroxyanthranilate 3,4-dioxygenase (186 aa).

Arg44 is a binding site for O2. His48, Glu54, and His96 together coordinate Fe cation. Glu54 is a binding site for substrate. The substrate site is built by Arg100 and Glu110. A divalent metal cation-binding residues include Cys125, Cys130, Cys164, and Cys167.

The protein belongs to the 3-HAO family. Fe(2+) is required as a cofactor.

It is found in the cytoplasm. It catalyses the reaction 3-hydroxyanthranilate + O2 = (2Z,4Z)-2-amino-3-carboxymuconate 6-semialdehyde. It functions in the pathway cofactor biosynthesis; NAD(+) biosynthesis; quinolinate from L-kynurenine: step 3/3. Its function is as follows. Catalyzes the oxidative ring opening of 3-hydroxyanthranilate to 2-amino-3-carboxymuconate semialdehyde, which spontaneously cyclizes to quinolinate. This chain is 3-hydroxyanthranilate 3,4-dioxygenase, found in Chaetomium globosum (strain ATCC 6205 / CBS 148.51 / DSM 1962 / NBRC 6347 / NRRL 1970) (Soil fungus).